Here is a 268-residue protein sequence, read N- to C-terminus: MMLENKAFEPRPAHSAPTVDKMALTGVNFYYGDAHAIRDVTLSFPERQVSALIGPSGCGKSTLLRILNRIYMLYPKMRATGSVTLDGQNILDPGYSMNELRARVGMVFQKPVPFPMSIYDNIAYGIRHHERISKAEMDVRVEQALRSAALWDEVKDKLKGSGLGLSGGQQQRLCIARAVALRPEVLLLDEPTSALDPISTAKVEELVARLKTDFTIVIVTHNMQQASRISDNTAFMYLGELVEYGPTAEIFQSPKVKRTEDYITGRYG.

Residues 22-263 (MALTGVNFYY…PKVKRTEDYI (242 aa)) form the ABC transporter domain. 54–61 (GPSGCGKS) is a binding site for ATP.

This sequence belongs to the ABC transporter superfamily. Phosphate importer (TC 3.A.1.7) family. In terms of assembly, the complex is composed of two ATP-binding proteins (PstB), two transmembrane proteins (PstC and PstA) and a solute-binding protein (PstS).

Its subcellular location is the cell inner membrane. The catalysed reaction is phosphate(out) + ATP + H2O = ADP + 2 phosphate(in) + H(+). In terms of biological role, part of the ABC transporter complex PstSACB involved in phosphate import. Responsible for energy coupling to the transport system. In Rhizobium johnstonii (strain DSM 114642 / LMG 32736 / 3841) (Rhizobium leguminosarum bv. viciae), this protein is Phosphate import ATP-binding protein PstB 2.